We begin with the raw amino-acid sequence, 288 residues long: Polyamine aminopropyltransferase (288 aa).

Residues 9–238 (ETLHDQFGQY…GIMTFAWATD (230 aa)) enclose the PABS domain. Q33 contacts S-methyl-5'-thioadenosine. 2 residues coordinate spermidine: H64 and D88. S-methyl-5'-thioadenosine contacts are provided by residues E108 and 140–141 (DG). Residue D158 is the Proton acceptor of the active site. Residue 158-161 (DCTD) coordinates spermidine. P165 serves as a coordination point for S-methyl-5'-thioadenosine.

Belongs to the spermidine/spermine synthase family. As to quaternary structure, homodimer or homotetramer.

The protein localises to the cytoplasm. The enzyme catalyses S-adenosyl 3-(methylsulfanyl)propylamine + putrescine = S-methyl-5'-thioadenosine + spermidine + H(+). It functions in the pathway amine and polyamine biosynthesis; spermidine biosynthesis; spermidine from putrescine: step 1/1. In terms of biological role, catalyzes the irreversible transfer of a propylamine group from the amino donor S-adenosylmethioninamine (decarboxy-AdoMet) to putrescine (1,4-diaminobutane) to yield spermidine. The chain is Polyamine aminopropyltransferase from Escherichia coli (strain UTI89 / UPEC).